The sequence spans 353 residues: 3'-5' exonuclease (353 aa).

Positions Met1 to Lys119 are disordered. Basic and acidic residues-rich tracts occupy residues Lys13–Lys30 and Lys37–Ala50. Over residues Thr59–Arg70 the composition is skewed to basic residues. Residues Lys71 to Pro90 show a composition bias toward basic and acidic residues. Residues Ser103, Ser109, and Ser111 each carry the phosphoserine modification. The 3'-5' exonuclease domain maps to Val145–Arg313. 3 residues coordinate Mg(2+): Asp162, Glu164, and Asp300.

It belongs to the WRNexo family.

The protein resides in the nucleus. Functionally, has exonuclease activity on both single-stranded and duplex templates bearing overhangs, but not blunt ended duplex DNA, and cleaves in a 3'-5' direction. Essential for the formation of DNA replication focal centers. Has an important role in maintaining genome stability. The sequence is that of 3'-5' exonuclease from Drosophila melanogaster (Fruit fly).